A 298-amino-acid chain; its full sequence is tRNA(Met) cytidine acetate ligase (298 aa).

ATP-binding positions include 6 to 19 (IAEY…HIYQ), G100, N157, and R182.

Belongs to the TmcAL family.

It localises to the cytoplasm. The enzyme catalyses cytidine(34) in elongator tRNA(Met) + acetate + ATP = N(4)-acetylcytidine(34) in elongator tRNA(Met) + AMP + diphosphate. Catalyzes the formation of N(4)-acetylcytidine (ac(4)C) at the wobble position of elongator tRNA(Met), using acetate and ATP as substrates. First activates an acetate ion to form acetyladenylate (Ac-AMP) and then transfers the acetyl group to tRNA to form ac(4)C34. The chain is tRNA(Met) cytidine acetate ligase from Mycoplasmopsis pulmonis (strain UAB CTIP) (Mycoplasma pulmonis).